A 1480-amino-acid chain; its full sequence is C-type mannose receptor 2 (1480 aa).

The N-terminal stretch at 1–30 (MGPIRPALAPWPRHLLRCVLLLGGLRLGHP) is a signal peptide. At 31-1413 (ADSAAALLEP…SAALPENPVA (1383 aa)) the chain is on the extracellular side. Positions 40 to 166 (PDVFLIFSQG…WNIYGSEEDL (127 aa)) constitute a Ricin B-type lectin domain. 2 disulfides stabilise this stretch: C53/C67 and C92/C111. Residues N101 and N139 are each glycosylated (N-linked (GlcNAc...) asparagine). Positions 181–229 (SHGKPCTIPFKYDNQWFHGCTSTGREDGHLWCATTQDYGKDERWGFCPI) constitute a Fibronectin type-II domain. 4 disulfides stabilise this stretch: C186-C212, C200-C227, C265-C358, and C334-C350. In terms of domain architecture, C-type lectin 1 spans 243-359 (LTDSCYQFNF…CSIALPYVCK (117 aa)). N363 carries an N-linked (GlcNAc...) asparagine glycan. 7 consecutive C-type lectin domains span residues 388–504 (FQGH…SICK), 527–643 (HSPS…RYIC), 677–808 (KLRH…WICK), 831–950 (FQEA…YICK), 978–1106 (FLNK…GFIC), 1131–1242 (YLNR…GAVC), and 1271–1391 (FREH…GVVC). Disulfide bonds link C409-C503, C480-C495, C617-C634, C703-C807, C784-C799, C852-C949, and C926-C941. A glycan (N-linked (GlcNAc...) asparagine) is linked at N1028. A disulfide bridge links C1077 with C1097. K1141 is covalently cross-linked (Glycyl lysine isopeptide (Lys-Gly) (interchain with G-Cter in SUMO1)). C1219 and C1233 form a disulfide bridge. N-linked (GlcNAc...) asparagine glycosylation is present at N1348. A disulfide bridge connects residues C1367 and C1382. Residues 1414 to 1434 (LVVVLTAAVLLLLALLTGALI) traverse the membrane as a helical segment. Topologically, residues 1435–1480 (LYRRRQSAERGSFEGARYSRSSRSGPAEATEKNILVSDMEMNEQQE) are cytoplasmic. Residues 1446 to 1480 (SFEGARYSRSSRSGPAEATEKNILVSDMEMNEQQE) form a disordered region.

In terms of assembly, interacts directly with PLAUR/UPAR and PLAU/pro-UPA to form a tri-molecular complex. Interacts with collagen V. Interacts with C-terminal region of type I collagen/COL1A1. In terms of processing, N-glycosylated. Post-translationally, phosphorylated.

The protein resides in the cell membrane. May play a role as endocytotic lectin receptor displaying calcium-dependent lectin activity. Internalizes glycosylated ligands from the extracellular space for release in an endosomal compartment via clathrin-mediated endocytosis. May be involved in plasminogen activation system controlling the extracellular level of PLAUR/PLAU, and thus may regulate protease activity at the cell surface. May contribute to cellular uptake, remodeling and degradation of extracellular collagen matrices. May participate in remodeling of extracellular matrix cooperating with the matrix metalloproteinases (MMPs) secreted by hepatic stellate cells. May mediate endocytosis of partially degraded collagens and glycoproteins produced in the extracellular matrix by MMPs. The protein is C-type mannose receptor 2 (Mrc2) of Rattus norvegicus (Rat).